The following is a 445-amino-acid chain: D-serine transporter DsdX (445 aa).

Residues 1–4 (MHSQ) lie on the Cytoplasmic side of the membrane. The helical transmembrane segment at 5–25 (IWVVSTLLISIVLIVLTIVKF) threads the bilayer. At 26–28 (KFH) the chain is on the periplasmic side. The chain crosses the membrane as a helical span at residues 29–49 (PFLALLLASFFVGTMMGMGPL). Residues 50-56 (DMVNAIE) lie on the Cytoplasmic side of the membrane. A helical membrane pass occupies residues 57–77 (SGIGGTLGFLAAVIGLGTILG). At 78 to 105 (KMMEVSGAAERIGLTLQRCRWLSVDVIM) the chain is on the periplasmic side. Residues 106–126 (VLVGLICGITLFVEVGVVLLI) traverse the membrane as a helical segment. At 127 to 139 (PLAFSIAKKTNTS) the chain is on the cytoplasmic side. Residues 140-160 (LLKLAIPLCTALMAVHCVVPP) form a helical membrane-spanning segment. The Periplasmic segment spans residues 161–177 (HPAALYVANKLGADIGS). A helical transmembrane segment spans residues 178–198 (VIVYGLLVGLMASLIGGPLFL). The Cytoplasmic segment spans residues 199-223 (KFLGQRLPFKPVPTEFADLKVRDEK). A helical transmembrane segment spans residues 224-244 (TLPSLGATLFTILLPIALMLV). Residues 245-257 (KTIAELNMARESG) lie on the Periplasmic side of the membrane. Residues 258-278 (LYILVEFIGNPITAMFIAVFV) form a helical membrane-spanning segment. Over 279 to 301 (AYYVLGIRQHMSMGTMLTHTENG) the chain is Cytoplasmic. The chain crosses the membrane as a helical span at residues 302-322 (FGSIANILLIIGAGGAFNAIL). Topologically, residues 323–342 (KSSSLADTLAVILSNMHMHP) are periplasmic. The next 3 helical transmembrane spans lie at 343–363 (ILLAWLVALILHAAVGSATVA), 364–384 (MMGATAIVAPMLPLYPDISPE), and 385–405 (IIAIAIGSGAIGCTIVTDSLF). Residues 406–424 (WLVKQYCGATLNETFKYYT) are Cytoplasmic-facing. A helical membrane pass occupies residues 425 to 445 (TATFIASVVALAGTFLLSFII).

It belongs to the GntP permease family.

Its subcellular location is the cell inner membrane. In terms of biological role, a D-serine-specific transporter, may function as a H(+) symporter. The sequence is that of D-serine transporter DsdX from Escherichia coli (strain K12).